The following is a 99-amino-acid chain: uncharacterized protein (99 aa).

Residues E10 to G29 form a helical membrane-spanning segment.

Its subcellular location is the membrane. This is an uncharacterized protein from Schizosaccharomyces pombe (strain 972 / ATCC 24843) (Fission yeast).